A 319-amino-acid chain; its full sequence is Acetaldehyde dehydrogenase 1 (319 aa).

C129 functions as the Acyl-thioester intermediate in the catalytic mechanism. NAD(+) contacts are provided by residues 160-168 (SAGPGTRAN) and N287.

This sequence belongs to the acetaldehyde dehydrogenase family.

It catalyses the reaction acetaldehyde + NAD(+) + CoA = acetyl-CoA + NADH + H(+). This chain is Acetaldehyde dehydrogenase 1, found in Burkholderia lata (strain ATCC 17760 / DSM 23089 / LMG 22485 / NCIMB 9086 / R18194 / 383).